The following is a 435-amino-acid chain: ATP-dependent protease ATPase subunit HslU (435 aa).

Residues I18, 60-65, D248, E313, and R385 contribute to the ATP site; that span reads GVGKTE.

Belongs to the ClpX chaperone family. HslU subfamily. In terms of assembly, a double ring-shaped homohexamer of HslV is capped on each side by a ring-shaped HslU homohexamer. The assembly of the HslU/HslV complex is dependent on binding of ATP.

The protein localises to the cytoplasm. Its function is as follows. ATPase subunit of a proteasome-like degradation complex; this subunit has chaperone activity. The binding of ATP and its subsequent hydrolysis by HslU are essential for unfolding of protein substrates subsequently hydrolyzed by HslV. HslU recognizes the N-terminal part of its protein substrates and unfolds these before they are guided to HslV for hydrolysis. In Rhizobium etli (strain CIAT 652), this protein is ATP-dependent protease ATPase subunit HslU.